We begin with the raw amino-acid sequence, 80 residues long: Large ribosomal subunit protein uL29 (80 aa).

Belongs to the universal ribosomal protein uL29 family.

This is Large ribosomal subunit protein uL29 from Mycobacterium marinum (strain ATCC BAA-535 / M).